A 664-amino-acid polypeptide reads, in one-letter code: Macoilin (664 aa).

4 helical membrane passes run 28-48 (TFLY…DFVL), 75-95 (AFSV…LLFI), 120-140 (VCLP…AIRF), and 154-174 (FAAH…KSYV). Residues 252 to 265 (YREKGKEKDKDAKK) show a composition bias toward basic and acidic residues. Positions 252–274 (YREKGKEKDKDAKKHNLGINNNN) are disordered. Ser-305 is subject to Phosphoserine. A compositionally biased stretch (polar residues) spans 320 to 348 (KNYKNASGVVNSSPRSHSATNGSIPSSSS). Residues 320-375 (KNYKNASGVVNSSPRSHSATNGSIPSSSSKNEKKQRCTSKGPSAHKDLMENCIPNN) are disordered. An N-linked (GlcNAc...) asparagine glycan is attached at Asn-324. Position 332 is a phosphoserine (Ser-332). N-linked (GlcNAc...) asparagine glycans are attached at residues Asn-340 and Asn-452. The tract at residues 630–664 (TSPLSPVSPHYSSKFVETSPSGLDPNASVYQPLKK) is disordered. Phosphoserine is present on residues Ser-631 and Ser-634. An N-linked (GlcNAc...) asparagine glycan is attached at Asn-655.

Belongs to the macoilin family.

The protein localises to the rough endoplasmic reticulum membrane. The protein resides in the nucleus membrane. In terms of biological role, plays a role in the regulation of neuronal activity. This chain is Macoilin, found in Rattus norvegicus (Rat).